The following is a 114-amino-acid chain: UPF0060 membrane protein GDI3492/Gdia_2889 (114 aa).

The next 4 helical transmembrane spans lie at 8–28 (FAVY…WWCW), 35–55 (AWVL…LTLV), 64–84 (FAAY…LVEG), and 92–112 (AAGV…GRGA).

It belongs to the UPF0060 family.

The protein resides in the cell inner membrane. The sequence is that of UPF0060 membrane protein GDI3492/Gdia_2889 from Gluconacetobacter diazotrophicus (strain ATCC 49037 / DSM 5601 / CCUG 37298 / CIP 103539 / LMG 7603 / PAl5).